Reading from the N-terminus, the 476-residue chain is Serine protease HTRA4 (476 aa).

A signal peptide spans 1-31; the sequence is MIRPQLRTAGLGRCLLPGLLLLLVPVLWAGA. The IGFBP N-terminal domain occupies 36–109; the sequence is TQPSCPAVCQ…PGFPSTCGCP (74 aa). 8 disulfides stabilise this stretch: cysteine 40–cysteine 66, cysteine 44–cysteine 68, cysteine 49–cysteine 69, cysteine 55–cysteine 72, cysteine 80–cysteine 94, cysteine 88–cysteine 106, cysteine 108–cysteine 127, and cysteine 116–cysteine 152. The Kazal-like domain maps to 88–154; that stretch reads CAPGLQCLQP…VPVQWGNCGD (67 aa). The segment at 202–362 is serine protease; sequence GSGFIVSEDG…IPSDRVRQFL (161 aa). Catalysis depends on charge relay system residues histidine 218, aspartate 248, and serine 326. The 92-residue stretch at 383–474 folds into the PDZ domain; sequence LQMLSLTVPL…NLLLTVIPET (92 aa).

This sequence belongs to the peptidase S1C family.

The protein resides in the secreted. In terms of biological role, serine protease. The protein is Serine protease HTRA4 (HTRA4) of Homo sapiens (Human).